The sequence spans 874 residues: Alanine--tRNA ligase (874 aa).

Residues His-564, His-568, Cys-665, and His-669 each contribute to the Zn(2+) site.

It belongs to the class-II aminoacyl-tRNA synthetase family. Requires Zn(2+) as cofactor.

It localises to the cytoplasm. It catalyses the reaction tRNA(Ala) + L-alanine + ATP = L-alanyl-tRNA(Ala) + AMP + diphosphate. In terms of biological role, catalyzes the attachment of alanine to tRNA(Ala) in a two-step reaction: alanine is first activated by ATP to form Ala-AMP and then transferred to the acceptor end of tRNA(Ala). Also edits incorrectly charged Ser-tRNA(Ala) and Gly-tRNA(Ala) via its editing domain. This chain is Alanine--tRNA ligase, found in Burkholderia multivorans (strain ATCC 17616 / 249).